Consider the following 275-residue polypeptide: Rhamnulose-1-phosphate aldolase (275 aa).

The active site involves E117. Residues H141, H143, and H212 each contribute to the Zn(2+) site.

It belongs to the aldolase class II family. RhaD subfamily. Homotetramer. The cofactor is Zn(2+).

The protein resides in the cytoplasm. It catalyses the reaction L-rhamnulose 1-phosphate = (S)-lactaldehyde + dihydroxyacetone phosphate. It functions in the pathway carbohydrate degradation; L-rhamnose degradation; glycerone phosphate from L-rhamnose: step 3/3. Catalyzes the reversible cleavage of L-rhamnulose-1-phosphate to dihydroxyacetone phosphate (DHAP) and L-lactaldehyde. In Salmonella dublin (strain CT_02021853), this protein is Rhamnulose-1-phosphate aldolase.